Consider the following 135-residue polypeptide: Aspartate 1-decarboxylase (135 aa).

Ser25 (schiff-base intermediate with substrate; via pyruvic acid) is an active-site residue. Pyruvic acid (Ser) is present on Ser25. Thr57 is a binding site for substrate. Residue Tyr58 is the Proton donor of the active site. 73 to 75 serves as a coordination point for substrate; the sequence is GSA.

This sequence belongs to the PanD family. As to quaternary structure, heterooctamer of four alpha and four beta subunits. Requires pyruvate as cofactor. Post-translationally, is synthesized initially as an inactive proenzyme, which is activated by self-cleavage at a specific serine bond to produce a beta-subunit with a hydroxyl group at its C-terminus and an alpha-subunit with a pyruvoyl group at its N-terminus.

It localises to the cytoplasm. It catalyses the reaction L-aspartate + H(+) = beta-alanine + CO2. It participates in cofactor biosynthesis; (R)-pantothenate biosynthesis; beta-alanine from L-aspartate: step 1/1. Its function is as follows. Catalyzes the pyruvoyl-dependent decarboxylation of aspartate to produce beta-alanine. This Albidiferax ferrireducens (strain ATCC BAA-621 / DSM 15236 / T118) (Rhodoferax ferrireducens) protein is Aspartate 1-decarboxylase.